The primary structure comprises 29 residues: Potassium channel toxin alpha-KTx 20.1 (29 aa).

Disulfide bonds link cysteine 2-cysteine 20, cysteine 7-cysteine 24, and cysteine 11-cysteine 26.

Belongs to the short scorpion toxin superfamily. Potassium channel inhibitor family. Alpha-KTx 20 subfamily. Expressed by the venom gland.

It is found in the secreted. Functionally, reduces potassium currents through Kv1.2/KCNA2 and Kv1.3/KCNA3 voltage-gated potassium channels. In Tityus trivittatus (Argentinean scorpion), this protein is Potassium channel toxin alpha-KTx 20.1.